A 464-amino-acid chain; its full sequence is Synaptosomal-associated protein 47 (464 aa).

A disordered region spans residues 20 to 42; the sequence is GRLWDSSGVPQRQKRPGPWRTQT. 2 consecutive t-SNARE coiled-coil homology domains span residues 154-216 and 401-463; these read VADA…LTEL and TSLP…MKRL.

It belongs to the SVAP1 family. Forms a complex containing SNAP47, VAMP2 and STX1A. Associates with the BLOC-1 complex. Interacts with BLOC1S6.

Its subcellular location is the endomembrane system. It localises to the cytoplasm. It is found in the perinuclear region. Functionally, plays a role in intracellular membrane fusion. This chain is Synaptosomal-associated protein 47 (SNAP47), found in Homo sapiens (Human).